Consider the following 94-residue polypeptide: Large ribosomal subunit protein bL27 (94 aa).

A propeptide spanning residues M1–F9 is cleaved from the precursor.

It belongs to the bacterial ribosomal protein bL27 family. Post-translationally, the N-terminus is cleaved by ribosomal processing cysteine protease Prp.

This chain is Large ribosomal subunit protein bL27, found in Staphylococcus haemolyticus (strain JCSC1435).